Consider the following 529-residue polypeptide: GMP synthase [glutamine-hydrolyzing] (529 aa).

The Glutamine amidotransferase type-1 domain maps to Thr-17–Asn-206. The active-site Nucleophile is the Cys-93. Residues His-180 and Glu-182 contribute to the active site. A GMPS ATP-PPase domain is found at Trp-207 to Arg-404. Ser-235–Thr-241 contributes to the ATP binding site. Arg-308, Asp-466, Lys-521, and Glu-527 together coordinate XMP.

Homodimer. The cofactor is Mg(2+).

The protein localises to the cytoplasm. It is found in the cytosol. The enzyme catalyses XMP + L-glutamine + ATP + H2O = GMP + L-glutamate + AMP + diphosphate + 2 H(+). It functions in the pathway purine metabolism; GMP biosynthesis; GMP from XMP (L-Gln route): step 1/1. In terms of biological role, catalyzes the conversion of xanthine monophosphate (XMP) to GMP in the presence of glutamine and ATP through an adenyl-XMP intermediate. This chain is GMP synthase [glutamine-hydrolyzing] (GUA1), found in Debaryomyces hansenii (strain ATCC 36239 / CBS 767 / BCRC 21394 / JCM 1990 / NBRC 0083 / IGC 2968) (Yeast).